Here is a 346-residue protein sequence, read N- to C-terminus: Phosphoribosylformylglycinamidine cyclo-ligase (346 aa).

It belongs to the AIR synthase family.

The protein resides in the cytoplasm. It carries out the reaction 2-formamido-N(1)-(5-O-phospho-beta-D-ribosyl)acetamidine + ATP = 5-amino-1-(5-phospho-beta-D-ribosyl)imidazole + ADP + phosphate + H(+). Its pathway is purine metabolism; IMP biosynthesis via de novo pathway; 5-amino-1-(5-phospho-D-ribosyl)imidazole from N(2)-formyl-N(1)-(5-phospho-D-ribosyl)glycinamide: step 2/2. The chain is Phosphoribosylformylglycinamidine cyclo-ligase from Bacillus cereus (strain B4264).